The following is a 689-amino-acid chain: Methionine--tRNA ligase (689 aa).

The 'HIGH' region motif lies at 13–23; sequence PYANGNFHIGH. The Zn(2+) site is built by Cys-144, Cys-147, Cys-157, and Cys-160. The 'KMSKS' region motif lies at 341 to 345; sequence KMSKS. Lys-344 contacts ATP. The tRNA-binding domain maps to 583–689; the sequence is DFAKVDLRIA…PGASPGLRVR (107 aa).

The protein belongs to the class-I aminoacyl-tRNA synthetase family. MetG type 1 subfamily. Homodimer. Requires Zn(2+) as cofactor.

It is found in the cytoplasm. The catalysed reaction is tRNA(Met) + L-methionine + ATP = L-methionyl-tRNA(Met) + AMP + diphosphate. Is required not only for elongation of protein synthesis but also for the initiation of all mRNA translation through initiator tRNA(fMet) aminoacylation. This is Methionine--tRNA ligase from Polaromonas sp. (strain JS666 / ATCC BAA-500).